We begin with the raw amino-acid sequence, 431 residues long: Glutamate--tRNA ligase 1 (431 aa).

The short motif at 6-16 (PSPTGDMHIGN) is the 'HIGH' region element. A 'KMSKS' region motif is present at residues 235–239 (KMSKR). K238 contributes to the ATP binding site.

The protein belongs to the class-I aminoacyl-tRNA synthetase family. Glutamate--tRNA ligase type 1 subfamily. In terms of assembly, monomer.

The protein resides in the cytoplasm. It catalyses the reaction tRNA(Glu) + L-glutamate + ATP = L-glutamyl-tRNA(Glu) + AMP + diphosphate. Its function is as follows. Catalyzes the attachment of glutamate to tRNA(Glu) in a two-step reaction: glutamate is first activated by ATP to form Glu-AMP and then transferred to the acceptor end of tRNA(Glu). The polypeptide is Glutamate--tRNA ligase 1 (Campylobacter jejuni subsp. jejuni serotype O:2 (strain ATCC 700819 / NCTC 11168)).